A 286-amino-acid chain; its full sequence is Pantothenate synthetase (286 aa).

Met-30 to His-37 is an ATP binding site. Residue His-37 is the Proton donor of the active site. Gln-61 serves as a coordination point for (R)-pantoate. A beta-alanine-binding site is contributed by Gln-61. Gly-147–Asp-150 is an ATP binding site. (R)-pantoate is bound at residue Gln-153. Residues Leu-176 and His-184–Arg-187 each bind ATP.

The protein belongs to the pantothenate synthetase family. In terms of assembly, homodimer.

Its subcellular location is the cytoplasm. The enzyme catalyses (R)-pantoate + beta-alanine + ATP = (R)-pantothenate + AMP + diphosphate + H(+). Its pathway is cofactor biosynthesis; (R)-pantothenate biosynthesis; (R)-pantothenate from (R)-pantoate and beta-alanine: step 1/1. Functionally, catalyzes the condensation of pantoate with beta-alanine in an ATP-dependent reaction via a pantoyl-adenylate intermediate. This chain is Pantothenate synthetase, found in Bartonella tribocorum (strain CIP 105476 / IBS 506).